We begin with the raw amino-acid sequence, 357 residues long: MQFGRTTLSKFVIENTRASHGELGALLIDVAAAVKTISAMVAKGALAGHHGALDSTNVQGEVQKKLDVLTNDAILRHCEWGGQLAGMASEEMDDPYPIPAEYPRGRYLLVFDPLDGSSNSDVNVSVGTIFSIFSRRAAGDAELGDYLRPGSEQVAAGYAIYGPSTMMVLTLGNGTHGFTLDRESGNFILTHANIRVPEDTREFAINTSNERFWEPPVQRYVSECKAGKSGVRGEDFNTRWIASMVAEVHRILIRGGIFMYPKDSKDPSKPGRLRLLYEANPMAMLIEQAGGAASTGRQRILDVVPDSLHQRAPVILGSKNEVERLARYHHEYDTGADRPFVSPLFSERSLFRDESRA.

Residues E90, D112, L114, and D115 each contribute to the Mg(2+) site. Substrate-binding positions include 115–118 (DGSS) and N206. A Mg(2+)-binding site is contributed by E278.

Belongs to the FBPase class 1 family. In terms of assembly, homotetramer. It depends on Mg(2+) as a cofactor.

The protein resides in the cytoplasm. The catalysed reaction is beta-D-fructose 1,6-bisphosphate + H2O = beta-D-fructose 6-phosphate + phosphate. It participates in carbohydrate biosynthesis; gluconeogenesis. This Dechloromonas aromatica (strain RCB) protein is Fructose-1,6-bisphosphatase class 1 2.